The following is a 117-amino-acid chain: Protein Rev (117 aa).

Residues S5 and S8 each carry the phosphoserine; by host CK2 modification. The tract at residues 18-26 (LIKILYQSN) is homomultimerization. A disordered region spans residues 24-49 (QSNPPPNTEGTTRQARRNRRRRWRAR). The Nuclear localization signal and RNA-binding (RRE) signature appears at 35 to 51 (TRQARRNRRRRWRARQR). Residues 37–49 (QARRNRRRRWRAR) show a composition bias toward basic residues. The Nuclear export signal and binding to XPO1 motif lies at 74 to 85 (LQLPPLERLTLN). Phosphoserine; by host is present on residues S93 and S100. Residues 93 to 105 (SGTQGVGSPQISV) are compositionally biased toward polar residues. The interval 93 to 117 (SGTQGVGSPQISVESPAILGSGTEE) is disordered.

The protein belongs to the HIV-1 REV protein family. Homomultimer; when bound to the RRE. Multimeric assembly is essential for activity and may involve XPO1. Binds to human KPNB1, XPO1, TNPO1, RANBP5 and IPO7. Interacts with the viral Integrase. Interacts with human KHDRBS1. Interacts with human NAP1; this interaction decreases Rev multimerization and stimulates its activity. Interacts with human DEAD-box helicases DDX3 and DDX24; these interactions may serve for viral RNA export to the cytoplasm and packaging, respectively. Interacts with human PSIP1; this interaction may inhibit HIV-1 DNA integration by promoting dissociation of the Integrase-LEDGF/p75 complex. Asymmetrically arginine dimethylated at one site by host PRMT6. Methylation impairs the RNA-binding activity and export of viral RNA from the nucleus to the cytoplasm. Post-translationally, phosphorylated by protein kinase CK2. Presence of, and maybe binding to the N-terminus of the regulatory beta subunit of CK2 is necessary for CK2-mediated Rev's phosphorylation.

It localises to the host nucleus. The protein resides in the host nucleolus. Its subcellular location is the host cytoplasm. In terms of biological role, escorts unspliced or incompletely spliced viral pre-mRNAs (late transcripts) out of the nucleus of infected cells. These pre-mRNAs carry a recognition sequence called Rev responsive element (RRE) located in the env gene, that is not present in fully spliced viral mRNAs (early transcripts). This function is essential since most viral proteins are translated from unspliced or partially spliced pre-mRNAs which cannot exit the nucleus by the pathway used by fully processed cellular mRNAs. Rev itself is translated from a fully spliced mRNA that readily exits the nucleus. Rev's nuclear localization signal (NLS) binds directly to KPNB1/Importin beta-1 without previous binding to KPNA1/Importin alpha-1. KPNB1 binds to the GDP bound form of RAN (Ran-GDP) and targets Rev to the nucleus. In the nucleus, the conversion from Ran-GDP to Ran-GTP dissociates Rev from KPNB1 and allows Rev's binding to the RRE in viral pre-mRNAs. Rev multimerization on the RRE via cooperative assembly exposes its nuclear export signal (NES) to the surface. Rev can then form a complex with XPO1/CRM1 and Ran-GTP, leading to nuclear export of the complex. Conversion from Ran-GTP to Ran-GDP mediates dissociation of the Rev/RRE/XPO1/RAN complex, so that Rev can return to the nucleus for a subsequent round of export. Beside KPNB1, also seems to interact with TNPO1/Transportin-1, RANBP5/IPO5 and IPO7/RANBP7 for nuclear import. The nucleoporin-like HRB/RIP is an essential cofactor that probably indirectly interacts with Rev to release HIV RNAs from the perinuclear region to the cytoplasm. The protein is Protein Rev of Human immunodeficiency virus type 1 group M subtype A (isolate MAL) (HIV-1).